The chain runs to 286 residues: 4-diphosphocytidyl-2-C-methyl-D-erythritol kinase (286 aa).

K13 is an active-site residue. An ATP-binding site is contributed by 96–106; the sequence is PMGGGIGGGSS. D138 is a catalytic residue.

Belongs to the GHMP kinase family. IspE subfamily.

It catalyses the reaction 4-CDP-2-C-methyl-D-erythritol + ATP = 4-CDP-2-C-methyl-D-erythritol 2-phosphate + ADP + H(+). It participates in isoprenoid biosynthesis; isopentenyl diphosphate biosynthesis via DXP pathway; isopentenyl diphosphate from 1-deoxy-D-xylulose 5-phosphate: step 3/6. In terms of biological role, catalyzes the phosphorylation of the position 2 hydroxy group of 4-diphosphocytidyl-2C-methyl-D-erythritol. This Pseudoalteromonas atlantica (strain T6c / ATCC BAA-1087) protein is 4-diphosphocytidyl-2-C-methyl-D-erythritol kinase.